A 65-amino-acid polypeptide reads, in one-letter code: Large ribosomal subunit protein uL29 (65 aa).

This sequence belongs to the universal ribosomal protein uL29 family.

In Hyphomonas neptunium (strain ATCC 15444), this protein is Large ribosomal subunit protein uL29.